Here is a 498-residue protein sequence, read N- to C-terminus: MAIPQKATVLVIGGGPGGSYSASALAREGIDTVVLEADVFPRYHIGESLVASIRPFLKFIDLDDTFVNYGFVRKNGAAFKLNNQKEAYTDFILEAGADTFAWNVVRSESDDLMFKHAAKSGAQTFDGVRVTSIEFTDDDDDDDNNTNRPVSASWKAKDGRTGSIEFDYLVDASGRAGITSTKYLKNRTFNNYLKNVASWGYWEGATPYGMGTPVEGQPFFEALQDGSGWVWFIPLHNNTTSIGIVMNQELSTQKKKLSTTTSSRAFYLESLAGARGISRLLDPTTATLTSDIKHASDWSYNASAYGSPYLRIVGDAGAFIDPYFSSGVHLAVSGGLSAAVSIAASIRGDCPEEAAWKWHSQGVANRYGRFLLVVLGATKQIRAGDRPVLNGVGDEGFDEAFMVIRPVIQGIADVQGKVPVQDVYDAVTFSTNVVQPAAEGKRDPGWVEKARGALSHDEKEVGSVLNNLAKAYKTTDVCEGLMARLERGHLGLKLVSEV.

FAD-binding residues include G14, G17, and E47. Positions 326 and 327 each coordinate chloride. V328 provides a ligand contact to FAD.

It belongs to the flavin-dependent halogenase family.

It catalyses the reaction ochratoxin B + FADH2 + chloride + O2 = ochratoxin A + FAD + 2 H2O. Its pathway is mycotoxin biosynthesis. Functionally, flavin-dependent halogenase; part of the gene cluster that mediates the biosynthesis of ochratoxin A (OTA), a mycotoxin composed of a chlorinated type I polyketide dihydroisocoumarin moiety linked to L-phenylalanine, and demonstrated to have nephrotoxic, immunotoxic, genotoxic, neurotoxic, and teratogenic properties. OtaD chlorinates ochratoxin B (OTB) at the C-5 position to form OTA. The pathway begins with the highly reducing polyketide synthase otaA that catalyzes the formation of the isocoumarin group during the initial stages of biosynthesis, starting from one acetate and 4 malonate units, to originate the characteristic pentaketide skeleton 7-methylmellein (7-MM) of the OTA molecule. The newly identified cyclase otaY might be involved in the polyketide cyclization reaction during the initial steps of the OTA biosynthesis. 7-MM is then oxidized into 7-carboxymellein (also called ochratoxin beta) by the cytochrome P450 monooxygenase otaC. The NRPS encoded by the otaB gene is involved in the linking of phenylalanine to the dihydroisocoumarin ring. The reaction catalyzed by NRPS results in the production of ochratoxin B (OTB), which is the non-chlorinated analog of OTA and which subsequently serves as the substrate of the halogenase otaD for chlorination activity to form the final molecular structure of OTA, containing a chlorine atom in the C-5 position of the molecule. This chain is Flavin-dependent halogenase otaD, found in Aspergillus carbonarius (strain ITEM 5010).